The following is a 261-amino-acid chain: tRNA pseudouridine synthase A (261 aa).

Asp-51 functions as the Nucleophile in the catalytic mechanism. Tyr-109 is a substrate binding site.

This sequence belongs to the tRNA pseudouridine synthase TruA family. In terms of assembly, homodimer.

It catalyses the reaction uridine(38/39/40) in tRNA = pseudouridine(38/39/40) in tRNA. Functionally, formation of pseudouridine at positions 38, 39 and 40 in the anticodon stem and loop of transfer RNAs. The polypeptide is tRNA pseudouridine synthase A (Tolumonas auensis (strain DSM 9187 / NBRC 110442 / TA 4)).